The primary structure comprises 62 residues: Fungus-induced protein 1 (62 aa).

An N-terminal signal peptide occupies residues 1–22 (MSQNLFQILLIFAILAALQVQG).

The sequence is that of Fungus-induced protein 1 from Caenorhabditis briggsae.